The sequence spans 89 residues: Small ribosomal subunit protein uS15 (89 aa).

This sequence belongs to the universal ribosomal protein uS15 family. As to quaternary structure, part of the 30S ribosomal subunit. Forms a bridge to the 50S subunit in the 70S ribosome, contacting the 23S rRNA.

In terms of biological role, one of the primary rRNA binding proteins, it binds directly to 16S rRNA where it helps nucleate assembly of the platform of the 30S subunit by binding and bridging several RNA helices of the 16S rRNA. Its function is as follows. Forms an intersubunit bridge (bridge B4) with the 23S rRNA of the 50S subunit in the ribosome. In Nitratidesulfovibrio vulgaris (strain DP4) (Desulfovibrio vulgaris), this protein is Small ribosomal subunit protein uS15.